A 386-amino-acid polypeptide reads, in one-letter code: Acetate kinase (386 aa).

Asn-7 lines the Mg(2+) pocket. An ATP-binding site is contributed by Lys-14. Arg-78 serves as a coordination point for substrate. The Proton donor/acceptor role is filled by Asp-135. ATP is bound by residues 195–199, 268–270, and 316–320; these read HLGNG, DMR, and GIGEN. Glu-370 is a binding site for Mg(2+).

The protein belongs to the acetokinase family. In terms of assembly, homodimer. The cofactor is Mg(2+). Mn(2+) serves as cofactor.

Its subcellular location is the cytoplasm. It catalyses the reaction acetate + ATP = acetyl phosphate + ADP. Its pathway is metabolic intermediate biosynthesis; acetyl-CoA biosynthesis; acetyl-CoA from acetate: step 1/2. Functionally, catalyzes the formation of acetyl phosphate from acetate and ATP. Can also catalyze the reverse reaction. The chain is Acetate kinase from Arthrobacter sp. (strain FB24).